The following is a 339-amino-acid chain: RxLR effector protein SFI4 (339 aa).

Residues 1–24 (MRVLRVTFLWALLLLVAFSASVYA) form the signal peptide. A RxLR-dEER motif is present at residues 51–74 (RGLRNSGMKLNDAKDFKGAIAKLR). 4 TPR repeats span residues 106-139 (AQILNDYGTVLIRAKQYDEAIEVLEDSVAMVEKI), 190-223 (IEASLRIAEGYKKLGNTKKNLKVLKDAVEAQNGE), 232-265 (AELYMELSTAHVAVGEIDDALRAAEVASAIFRQR), and 274-307 (AFSLNALAGVKMRQKKVDEAIKLLEQAHRIAVQI).

It belongs to the RxLR effector family.

Its subcellular location is the secreted. It localises to the host nucleus. It is found in the host cytoplasm. Its function is as follows. Effector that suppresses flg22-induced post-translational MAP kinase activation in tomato but not in Arabidopsis. The perception of highly conserved pathogen- or microbe-associated molecular patterns (PAMPs/MAMPs), such as flg22, triggers converging signaling pathways recruiting MAP kinase cascades and inducing transcriptional re-programming, yielding a generic antimicrobial response. In Phytophthora infestans (strain T30-4) (Potato late blight agent), this protein is RxLR effector protein SFI4.